Here is a 60-residue protein sequence, read N- to C-terminus: Light-harvesting protein B-800/850 alpha chain (60 aa).

At 1–14 (MNNAKIWTVVKPST) the chain is on the cytoplasmic side. A helical membrane pass occupies residues 15–35 (GIPLILGAVAVAALIVHAGLL). Histidine 31 contributes to the a bacteriochlorophyll binding site. At 36-60 (TNTTWFANYWNGNPMATVVAVAPAQ) the chain is on the periplasmic side.

The protein belongs to the antenna complex alpha subunit family. In terms of assembly, the core complex is formed by different alpha and beta chains, binding bacteriochlorophyll molecules, and arranged most probably in tetrameric structures disposed around the reaction center. The non-pigmented gamma chains may constitute additional components.

The protein resides in the cell inner membrane. Its function is as follows. Antenna complexes are light-harvesting systems, which transfer the excitation energy to the reaction centers. The sequence is that of Light-harvesting protein B-800/850 alpha chain (pucA) from Rhodobacter capsulatus (Rhodopseudomonas capsulata).